The chain runs to 365 residues: MISTPYYLIDKSALLRNLQVIDQVRERSGAKVLLALKCFATWSVFDLMQQYMDGTTSSSLYEVKLGHQKFGGETHAYSVAFADHEIDEVVAHCDKIIFNSISQFQRFSSHAGNKPKGLRLNPGVSCASFDLADPARPFSRLGESDPARILSIIDQLDGVMIHNNCENRDFERFDALLTEVEQRYGEILHRLSWVSLGGGISFTTPGYSIDAFCERLRRFAQTYDVQVYLEPGEATVRDTTTLEVSVVDIGFNGKNLAVVDSSTEAHMLDLLIYRETAPIKNAQGDHAYQICGKTCLAGDIFGEARFEQPLQIGDRISIGDAGGYTMVKKNWFNGVHMPAIAIKEADGSVRAVREFSFDDYVSSLS.

Lysine 37 carries the post-translational modification N6-(pyridoxal phosphate)lysine. Positions 233 and 269 each coordinate substrate.

The protein belongs to the Orn/Lys/Arg decarboxylase class-II family. NspC subfamily. Homodimer. Pyridoxal 5'-phosphate is required as a cofactor.

The protein localises to the cytoplasm. It carries out the reaction carboxynorspermidine + H(+) = norspermidine + CO2. It catalyses the reaction carboxyspermidine + H(+) = spermidine + CO2. In terms of biological role, catalyzes the decarboxylation of carboxynorspermidine and carboxyspermidine. This is Carboxynorspermidine/carboxyspermidine decarboxylase from Herminiimonas arsenicoxydans.